Here is a 93-residue protein sequence, read N- to C-terminus: Red pigment-concentrating hormone (93 aa).

Positions 1-21 (MVRAVVATLLVVLVVASCVSA) are cleaved as a signal peptide. The residue at position 22 (Gln-22) is a Pyrrolidone carboxylic acid. Trp-29 is modified (tryptophan amide). Positions 33–93 (AAAGGEGTGM…VQCQDEEYLG (61 aa)) are excised as a propeptide. A disordered region spans residues 34–56 (AAGGEGTGMHPPAGAVVPPPSSL).

Belongs to the AKH/HRTH/RPCH family. As to expression, strongly expressed in the eyestalk and weakly in brain. Not expressed in other tissues tested.

The protein resides in the secreted. Its function is as follows. This hormone adapts the animal to light backgrounds by stimulating concentration of the pigment of its red body-chromatophores. This Penaeus monodon (Giant tiger prawn) protein is Red pigment-concentrating hormone.